Consider the following 330-residue polypeptide: Putative aminohydrolase AF_1775 (330 aa).

Positions 54, 56, 181, and 253 each coordinate Zn(2+).

This sequence belongs to the metallo-dependent hydrolases superfamily. ATZ/TRZ family.

This chain is Putative aminohydrolase AF_1775, found in Archaeoglobus fulgidus (strain ATCC 49558 / DSM 4304 / JCM 9628 / NBRC 100126 / VC-16).